Here is a 567-residue protein sequence, read N- to C-terminus: UPF0313 protein Tpet_0582 (567 aa).

The Radical SAM core domain occupies 288-560 (KAIETVKFSI…NKMKENVLFK (273 aa)). Residues C303, C307, and C310 each coordinate [4Fe-4S] cluster.

It belongs to the UPF0313 family. [4Fe-4S] cluster is required as a cofactor.

This Thermotoga petrophila (strain ATCC BAA-488 / DSM 13995 / JCM 10881 / RKU-1) protein is UPF0313 protein Tpet_0582.